The chain runs to 215 residues: MKYELTATEARVIGCLLEKQVTTPEQYPLSVNGVVTACNQKTNREPVMNLTEQEVQEQLDNLVKRHFLRTVSGFGNRVTKYEQRFCNSEFGDLKLSAAEVALVTTLLLRGAQTPGELRSRASRMHEFSDMAEVESTLERLASREDGPYVVRLAREPGKRESRYIHLFCGDVDELSLQTSAPESASGDLQSRVEALESEVAELKQRLDSLLAHLGE.

The protein belongs to the UPF0502 family.

The sequence is that of UPF0502 protein YceH from Salmonella paratyphi A (strain ATCC 9150 / SARB42).